The chain runs to 43 residues: Protein PsbN (43 aa).

Residues Ile-7–Phe-27 traverse the membrane as a helical segment.

The protein belongs to the PsbN family.

Its subcellular location is the plastid. It localises to the chloroplast thylakoid membrane. In terms of biological role, may play a role in photosystem I and II biogenesis. In Glycine max (Soybean), this protein is Protein PsbN.